The sequence spans 228 residues: Phosphoglycolate phosphatase (228 aa).

The Nucleophile role is filled by Asp-9. The Mg(2+) site is built by Asp-9 and Asp-11. Lys-151 is a binding site for substrate. Positions 174 and 178 each coordinate Mg(2+).

The protein belongs to the archaeal SPP-like hydrolase family. Mg(2+) serves as cofactor.

The catalysed reaction is 2-phosphoglycolate + H2O = glycolate + phosphate. In terms of biological role, catalyzes the dephosphorylation of 2-phosphoglycolate. This is Phosphoglycolate phosphatase from Pyrobaculum aerophilum (strain ATCC 51768 / DSM 7523 / JCM 9630 / CIP 104966 / NBRC 100827 / IM2).